Reading from the N-terminus, the 404-residue chain is Ethanolamine-phosphate cytidylyltransferase (404 aa).

The disordered stretch occupies residues 173 to 201 (YADSFGKPPHPTPAGDTLSSEVSSQCPGG). Positions 189-201 (TLSSEVSSQCPGG) are enriched in polar residues. Residues 239-240 (AF), 247-250 (HVDF), Lys277, 325-328 (HGKT), and 354-358 (SGSDL) each bind CTP. Ser356 is subject to Phosphoserine. A phosphothreonine mark is found at Thr359 and Thr360.

Belongs to the cytidylyltransferase family.

It catalyses the reaction phosphoethanolamine + CTP + H(+) = CDP-ethanolamine + diphosphate. It participates in phospholipid metabolism; phosphatidylethanolamine biosynthesis; phosphatidylethanolamine from ethanolamine: step 2/3. Its function is as follows. Ethanolamine-phosphate cytidylyltransferase that catalyzes the second step in the synthesis of phosphatidylethanolamine (PE) from ethanolamine via the CDP-ethanolamine pathway. Phosphatidylethanolamine is a dominant inner-leaflet phospholipid in cell membranes, where it plays a role in membrane function by structurally stabilizing membrane-anchored proteins, and participates in important cellular processes such as cell division, cell fusion, blood coagulation, and apoptosis. The sequence is that of Ethanolamine-phosphate cytidylyltransferase (Pcyt2) from Mus musculus (Mouse).